Consider the following 66-residue polypeptide: Protein translocase subunit SecE (66 aa).

Residues 34 to 54 (LVVIVAVFVFSLICLVLDYGI) traverse the membrane as a helical segment.

The protein belongs to the SecE/SEC61-gamma family. As to quaternary structure, component of the Sec protein translocase complex. Heterotrimer consisting of SecY, SecE and SecG subunits. The heterotrimers can form oligomers, although 1 heterotrimer is thought to be able to translocate proteins. Interacts with the ribosome. Interacts with SecDF, and other proteins may be involved. Interacts with SecA.

The protein localises to the cell inner membrane. Its function is as follows. Essential subunit of the Sec protein translocation channel SecYEG. Clamps together the 2 halves of SecY. May contact the channel plug during translocation. The sequence is that of Protein translocase subunit SecE from Rickettsia bellii (strain RML369-C).